We begin with the raw amino-acid sequence, 245 residues long: tRNA pseudouridine synthase A (245 aa).

Catalysis depends on Asp-52, which acts as the Nucleophile. A substrate-binding site is contributed by Tyr-110.

This sequence belongs to the tRNA pseudouridine synthase TruA family. As to quaternary structure, homodimer.

The catalysed reaction is uridine(38/39/40) in tRNA = pseudouridine(38/39/40) in tRNA. Formation of pseudouridine at positions 38, 39 and 40 in the anticodon stem and loop of transfer RNAs. This Borrelia duttonii (strain Ly) protein is tRNA pseudouridine synthase A.